Reading from the N-terminus, the 311-residue chain is Aspartate carbamoyltransferase catalytic subunit (311 aa).

Arginine 55 and threonine 56 together coordinate carbamoyl phosphate. Lysine 85 serves as a coordination point for L-aspartate. Carbamoyl phosphate is bound by residues arginine 106, histidine 135, and glutamine 138. Residues arginine 168 and arginine 230 each coordinate L-aspartate. Carbamoyl phosphate contacts are provided by leucine 268 and proline 269.

The protein belongs to the aspartate/ornithine carbamoyltransferase superfamily. ATCase family. In terms of assembly, heterododecamer (2C3:3R2) of six catalytic PyrB chains organized as two trimers (C3), and six regulatory PyrI chains organized as three dimers (R2).

It carries out the reaction carbamoyl phosphate + L-aspartate = N-carbamoyl-L-aspartate + phosphate + H(+). Its pathway is pyrimidine metabolism; UMP biosynthesis via de novo pathway; (S)-dihydroorotate from bicarbonate: step 2/3. Its function is as follows. Catalyzes the condensation of carbamoyl phosphate and aspartate to form carbamoyl aspartate and inorganic phosphate, the committed step in the de novo pyrimidine nucleotide biosynthesis pathway. The polypeptide is Aspartate carbamoyltransferase catalytic subunit (Escherichia coli O139:H28 (strain E24377A / ETEC)).